A 205-amino-acid chain; its full sequence is Rho-related GTP-binding protein RhoQ (205 aa).

Position 16–23 (16–23) interacts with GTP; the sequence is GDGAVGKT. An Effector region motif is present at residues 38–46; it reads YVPTVFDHY. GTP is bound by residues 63–67 and 121–124; these read DTAGQ and TQID. Cysteine methyl ester is present on Cys-202. A lipid anchor (S-farnesyl cysteine) is attached at Cys-202. Positions 203–205 are cleaved as a propeptide — removed in mature form; sequence LIT.

The protein belongs to the small GTPase superfamily. Rho family. As to quaternary structure, interacts with EXO70, CDC42EP1, CDC42EP2 and CDC42EP3 in a GTP-dependent manner. Interacts with CDC42EP4, PARD6A, PARD6G (and probably PARD6B) in a GTP-dependent manner. Part of a quaternary complex containing PARD3, some PARD6 protein (PARD6A, PARD6B or PARD6G) and some atypical PKC protein (PRKCI or PRKCZ). Interacts with GOPC. Interacts with ARHGAP33/TCGAP. In terms of processing, may be post-translationally modified by both palmitoylation and polyisoprenylation.

Its subcellular location is the cytoplasm. It localises to the cell membrane. Regulated by guanine nucleotide exchange factors (GEFs) which promote the exchange of bound GDP for free GTP, GTPase activating proteins (GAPs) which increase the GTP hydrolysis activity, and GDP dissociation inhibitors which inhibit the dissociation of the nucleotide from the GTPase. Plasma membrane-associated small GTPase which cycles between an active GTP-bound and an inactive GDP-bound state. In active state binds to a variety of effector proteins to regulate cellular responses. Involved in epithelial cell polarization processes. May play a role in CFTR trafficking to the plasma membrane. Causes the formation of thin, actin-rich surface projections called filopodia. This is Rho-related GTP-binding protein RhoQ (Rhoq) from Mus musculus (Mouse).